Here is a 181-residue protein sequence, read N- to C-terminus: ATP-dependent protease subunit HslV (181 aa).

Residue Thr6 is part of the active site. Na(+)-binding residues include Ala162, Cys165, and Thr168.

Belongs to the peptidase T1B family. HslV subfamily. In terms of assembly, a double ring-shaped homohexamer of HslV is capped on each side by a ring-shaped HslU homohexamer. The assembly of the HslU/HslV complex is dependent on binding of ATP.

The protein resides in the cytoplasm. The enzyme catalyses ATP-dependent cleavage of peptide bonds with broad specificity.. Its activity is regulated as follows. Allosterically activated by HslU binding. Functionally, protease subunit of a proteasome-like degradation complex believed to be a general protein degrading machinery. This chain is ATP-dependent protease subunit HslV, found in Solidesulfovibrio magneticus (strain ATCC 700980 / DSM 13731 / RS-1) (Desulfovibrio magneticus).